The primary structure comprises 335 residues: Biotin synthase (335 aa).

Residues 51 to 278 form the Radical SAM core domain; the sequence is NTVQLSSLLS…LAKVRLSAGR (228 aa). Residues Cys66, Cys70, and Cys73 each coordinate [4Fe-4S] cluster. Residues Cys110, Cys141, Cys201, and Arg273 each contribute to the [2Fe-2S] cluster site.

It belongs to the radical SAM superfamily. Biotin synthase family. In terms of assembly, homodimer. [4Fe-4S] cluster is required as a cofactor. [2Fe-2S] cluster serves as cofactor.

The catalysed reaction is (4R,5S)-dethiobiotin + (sulfur carrier)-SH + 2 reduced [2Fe-2S]-[ferredoxin] + 2 S-adenosyl-L-methionine = (sulfur carrier)-H + biotin + 2 5'-deoxyadenosine + 2 L-methionine + 2 oxidized [2Fe-2S]-[ferredoxin]. Its pathway is cofactor biosynthesis; biotin biosynthesis; biotin from 7,8-diaminononanoate: step 2/2. Its function is as follows. Catalyzes the conversion of dethiobiotin (DTB) to biotin by the insertion of a sulfur atom into dethiobiotin via a radical-based mechanism. This chain is Biotin synthase, found in Bordetella bronchiseptica (strain ATCC BAA-588 / NCTC 13252 / RB50) (Alcaligenes bronchisepticus).